Consider the following 716-residue polypeptide: Hepatocyte growth factor-like protein (716 aa).

Residues 1–18 (MGWLPLLLLLVQCSRALG) form the signal peptide. Positions 19–105 (QRSPLNDFQL…SLCHLFQKKD (87 aa)) constitute a PAN domain. Cystine bridges form between cysteine 56–cysteine 78, cysteine 60–cysteine 66, cysteine 110–cysteine 186, cysteine 131–cysteine 169, cysteine 157–cysteine 181, cysteine 191–cysteine 268, cysteine 194–cysteine 333, cysteine 212–cysteine 251, cysteine 240–cysteine 263, cysteine 292–cysteine 370, cysteine 313–cysteine 352, cysteine 341–cysteine 364, cysteine 379–cysteine 457, cysteine 400–cysteine 440, cysteine 428–cysteine 452, cysteine 477–cysteine 593, cysteine 512–cysteine 528, cysteine 607–cysteine 672, cysteine 637–cysteine 651, and cysteine 662–cysteine 690. Asparagine 72 carries N-linked (GlcNAc...) asparagine glycosylation. Kringle domains are found at residues 110-186 (CIMD…IKTC), 191-268 (CVLC…LPSC), 292-370 (CFRG…IPRC), and 379-457 (CYHG…LQRC). N-linked (GlcNAc...) asparagine glycosylation occurs at asparagine 173. Asparagine 305 carries an N-linked (GlcNAc...) asparagine glycan. The Peptidase S1 domain maps to 489 to 714 (VVGGHPGNSP…FVDWINKVMQ (226 aa)). Asparagine 620 is a glycosylation site (N-linked (GlcNAc...) asparagine).

Belongs to the peptidase S1 family. Plasminogen subfamily. In terms of assembly, dimer of an alpha chain and a beta chain linked by a disulfide bond. Interacts (via beta chain) with MST1R (via SEMA domain). In terms of processing, cleaved after Arg-488, probably by HPN/Hepsin, to yield the active form consisting of two disulfide-linked chains. In terms of tissue distribution, liver. Lower levels in lung, placenta and adrenal.

The protein localises to the secreted. The chain is Hepatocyte growth factor-like protein (Mst1) from Mus musculus (Mouse).